A 154-amino-acid chain; its full sequence is MRLQILAVGRLKDGPERDLTDDYIRRASAMARGLGFKGPEEAEIASGGGMDAEGARLLARIPEGARIIRLDEGGENLTSEAFASRLSRWRDDGERDTCFLIGGAEGYAPDVRAAAPQTLAFGVQTWPHRLVRAMLAEQLYRAMTILAGTPYHKA.

Residues Leu70 and Gly102 each contribute to the S-adenosyl-L-methionine site.

It belongs to the RNA methyltransferase RlmH family. Homodimer.

It is found in the cytoplasm. The enzyme catalyses pseudouridine(1915) in 23S rRNA + S-adenosyl-L-methionine = N(3)-methylpseudouridine(1915) in 23S rRNA + S-adenosyl-L-homocysteine + H(+). Specifically methylates the pseudouridine at position 1915 (m3Psi1915) in 23S rRNA. In Hyphomonas neptunium (strain ATCC 15444), this protein is Ribosomal RNA large subunit methyltransferase H.